The following is an 84-amino-acid chain: RNA-binding protein Hfq (84 aa).

The 60-residue stretch at 9–68 folds into the Sm domain; that stretch reads DPYLNTLRKERVPVSIYLVNGIKLQGQIESFDQFVILLKNTVSQMVYKHAISTVVPGRPV.

Belongs to the Hfq family. In terms of assembly, homohexamer.

Its function is as follows. RNA chaperone that binds small regulatory RNA (sRNAs) and mRNAs to facilitate mRNA translational regulation in response to envelope stress, environmental stress and changes in metabolite concentrations. Also binds with high specificity to tRNAs. The polypeptide is RNA-binding protein Hfq (Stutzerimonas stutzeri (strain A1501) (Pseudomonas stutzeri)).